A 144-amino-acid polypeptide reads, in one-letter code: Large ribosomal subunit protein uL14 (144 aa).

This sequence belongs to the universal ribosomal protein uL14 family. In terms of assembly, part of the 50S ribosomal subunit. Forms a cluster with proteins L3 and L24e, part of which may contact the 16S rRNA in 2 intersubunit bridges.

Binds to 23S rRNA. Forms part of two intersubunit bridges in the 70S ribosome. The protein is Large ribosomal subunit protein uL14 of Pyrobaculum aerophilum (strain ATCC 51768 / DSM 7523 / JCM 9630 / CIP 104966 / NBRC 100827 / IM2).